We begin with the raw amino-acid sequence, 326 residues long: Ribosomal large subunit pseudouridine synthase D (326 aa).

The active site involves D144.

It belongs to the pseudouridine synthase RluA family.

It localises to the cytoplasm. It carries out the reaction uridine(1911/1915/1917) in 23S rRNA = pseudouridine(1911/1915/1917) in 23S rRNA. Responsible for synthesis of pseudouridine from uracil at positions 1911, 1915 and 1917 in 23S ribosomal RNA. This Borreliella burgdorferi (strain ATCC 35210 / DSM 4680 / CIP 102532 / B31) (Borrelia burgdorferi) protein is Ribosomal large subunit pseudouridine synthase D.